Here is a 114-residue protein sequence, read N- to C-terminus: Phosphoribosyl-ATP pyrophosphatase (114 aa).

It belongs to the PRA-PH family.

It is found in the cytoplasm. The enzyme catalyses 1-(5-phospho-beta-D-ribosyl)-ATP + H2O = 1-(5-phospho-beta-D-ribosyl)-5'-AMP + diphosphate + H(+). The protein operates within amino-acid biosynthesis; L-histidine biosynthesis; L-histidine from 5-phospho-alpha-D-ribose 1-diphosphate: step 2/9. The sequence is that of Phosphoribosyl-ATP pyrophosphatase from Leuconostoc mesenteroides subsp. mesenteroides (strain ATCC 8293 / DSM 20343 / BCRC 11652 / CCM 1803 / JCM 6124 / NCDO 523 / NBRC 100496 / NCIMB 8023 / NCTC 12954 / NRRL B-1118 / 37Y).